We begin with the raw amino-acid sequence, 250 residues long: tRNA pseudouridine synthase A (250 aa).

D53 functions as the Nucleophile in the catalytic mechanism. A substrate-binding site is contributed by Y111.

This sequence belongs to the tRNA pseudouridine synthase TruA family. Homodimer.

It catalyses the reaction uridine(38/39/40) in tRNA = pseudouridine(38/39/40) in tRNA. Formation of pseudouridine at positions 38, 39 and 40 in the anticodon stem and loop of transfer RNAs. This Streptococcus uberis (strain ATCC BAA-854 / 0140J) protein is tRNA pseudouridine synthase A.